The sequence spans 88 residues: UPF0213 protein EF_2693 (88 aa).

A GIY-YIG domain is found at Lys5–Gln82.

Belongs to the UPF0213 family.

This Enterococcus faecalis (strain ATCC 700802 / V583) protein is UPF0213 protein EF_2693.